The primary structure comprises 271 residues: Urease accessory protein UreD (271 aa).

The protein belongs to the UreD family. In terms of assembly, ureD, UreF and UreG form a complex that acts as a GTP-hydrolysis-dependent molecular chaperone, activating the urease apoprotein by helping to assemble the nickel containing metallocenter of UreC. The UreE protein probably delivers the nickel.

The protein localises to the cytoplasm. In terms of biological role, required for maturation of urease via the functional incorporation of the urease nickel metallocenter. In Actinomyces naeslundii, this protein is Urease accessory protein UreD.